We begin with the raw amino-acid sequence, 116 residues long: UPF0102 protein Neut_1662 (116 aa).

The protein belongs to the UPF0102 family.

This chain is UPF0102 protein Neut_1662, found in Nitrosomonas eutropha (strain DSM 101675 / C91 / Nm57).